Here is a 263-residue protein sequence, read N- to C-terminus: Methylesterase 4 (263 aa).

Serine 84 functions as the Acyl-ester intermediate in the catalytic mechanism. Active-site charge relay system residues include aspartate 213 and histidine 241.

This sequence belongs to the AB hydrolase superfamily. Methylesterase family.

It carries out the reaction methyl salicylate + H2O = salicylate + methanol + H(+). The protein operates within plant hormone biosynthesis. Its activity is regulated as follows. Esterase activity is down-regulated by salicylic acid (SA). Functionally, methylesterase shown to have carboxylesterase activity and methyl salicylate (MeSA) esterase activity in vitro. This is Methylesterase 4 from Arabidopsis thaliana (Mouse-ear cress).